Here is a 681-residue protein sequence, read N- to C-terminus: Amine oxidase [copper-containing] alpha 3, peroxisomal (681 aa).

Residue 323–334 (YLDCGDFGCGQC) participates in substrate binding. Asp-325 (proton acceptor) is an active-site residue. Cys-344 and Cys-370 are joined by a disulfide. Substrate is bound at residue 410 to 415 (VGNYDY). Tyr-413 acts as the Schiff-base intermediate with substrate; via topaquinone in catalysis. Tyr-413 bears the 2',4',5'-topaquinone mark. Residues His-470 and His-472 each coordinate Cu cation. Asp-481, Asp-621, and Ile-622 together coordinate Mn(2+). His-632 lines the Cu cation pocket.

It belongs to the copper/topaquinone oxidase family. In terms of processing, topaquinone (TPQ) is generated by copper-dependent autoxidation of a specific tyrosyl residue. In terms of tissue distribution, mostly expressed in stems, and, at lower levels, in flowers and leaves. Mainly detectable in stipules, hypocotyls and roots.

The protein resides in the peroxisome. The enzyme catalyses a primary methyl amine + O2 + H2O = an aldehyde + H2O2 + NH4(+). Its pathway is amine and polyamine degradation; putrescine degradation. Functionally, copper amine oxidase that can use putrescine and spermidine as substrates. Involved in putrescine catabolism in peroxisomes. This chain is Amine oxidase [copper-containing] alpha 3, peroxisomal, found in Arabidopsis thaliana (Mouse-ear cress).